A 117-amino-acid polypeptide reads, in one-letter code: Transcription elongation factor A protein-like 8 (117 aa).

Composition is skewed to basic and acidic residues over residues 1-10 and 61-75; these read MQKSCEENEG and FKEDTPVRHLDPEEM. Residues 1–75 form a disordered region; that stretch reads MQKSCEENEG…PVRHLDPEEM (75 aa). Residues 73–100 are a coiled coil; it reads EEMIRGVDELERLREEIRRVRNKFVMMH.

It belongs to the TFS-II family. TFA subfamily.

It localises to the nucleus. May be involved in transcriptional regulation. The sequence is that of Transcription elongation factor A protein-like 8 (TCEAL8) from Homo sapiens (Human).